An 802-amino-acid polypeptide reads, in one-letter code: Endoplasmin (802 aa).

Residues 1-21 (MRALWVLGLCCVLLTFGSARA) form the signal peptide. An SRT pseudosubstrate motif motif is present at residues 42–44 (SRT). Asn62 carries an N-linked (GlcNAc...) asparagine glycan. Ser64 is modified (phosphoserine). An N-linked (GlcNAc...) asparagine glycan is attached at Asn107. ATP is bound by residues Asn107, Asp149, and Asn162. Position 168 is an N6-(2-hydroxyisobutyryl)lysine (Lys168). Position 172 is a phosphoserine (Ser172). Residue Phe199 participates in ATP binding. The N-linked (GlcNAc...) asparagine glycan is linked to Asn217. Positions 288-323 (TVEEPAEEEEAAKEEKEEADDEAAVEEEEEEKKPKT) are disordered. Residues 289-317 (VEEPAEEEEAAKEEKEEADDEAAVEEEEE) are compositionally biased toward acidic residues. Phosphoserine is present on Ser403. Lys404 is subject to N6-succinyllysine. Asn445 carries an N-linked (GlcNAc...) asparagine glycan. Ser447 is modified (phosphoserine). The residue at position 479 (Lys479) is an N6-acetyllysine. N-linked (GlcNAc...) asparagine glycosylation is found at Asn481 and Asn502. An N6-succinyllysine modification is found at Lys633. Residues 750–802 (DPDAKVEEEPEEEPEDTTEDTEQDEEEEMDAGTDEEEQEQEPEKKSTAEKDEL) form a disordered region. Positions 757–789 (EEPEEEPEDTTEDTEQDEEEEMDAGTDEEEQEQ) are enriched in acidic residues. A Phosphothreonine modification is found at Thr782. Over residues 790–802 (EPEKKSTAEKDEL) the composition is skewed to basic and acidic residues. Residues 799–802 (KDEL) carry the Prevents secretion from ER motif.

The protein belongs to the heat shock protein 90 family. In terms of assembly, homodimer; disulfide-linked. Component of an EIF2 complex at least composed of CELF1/CUGBP1, CALR, CALR3, EIF2S1, EIF2S2, HSP90B1 and HSPA5. Part of a large chaperone multiprotein complex comprising DNAJB11, HSP90B1, HSPA5, HYOU, PDIA2, PDIA4, PDIA6, PPIB, SDF2L1, UGGT1 and very small amounts of ERP29, but not, or at very low levels, CALR nor CANX. Interacts with AIMP1; regulates its retention in the endoplasmic reticulum. Hyperglycosylated form interacts with OS9; promoting its degradation by the endoplasmic reticulum associated degradation (ERAD). Interacts with CNPY3. This interaction is disrupted in the presence of ATP. Interacts with TLR4 and TLR9, but not with TLR3. Interacts with MZB1 in a calcium-dependent manner. Interacts with METTL23. Interacts with IL1B; the interaction facilitates cargo translocation into the ERGIC. Interacts with EIF2AK3. In terms of processing, phosphorylated by CK2. N-glycosylated cotranslationally at Asn-217 by STT3A-containing OST-A complex: this glycosylation is constitutive. In response to various stress, 5 additional facultative sites (Asn-62, Asn-107, Asn-445, Asn-481 and Asn-502) can be glycosylated post-translationally by STT3B-containing OST-B complex, leading to a hyperglycosylated form that is degraded by the ER-associated degradation (ERAD) pathway. In normal conditions, the OST-A complex together with CCDC134 prevent glycosylation at facultative sites during protein folding, thereby preventing hyperglycosylation. Mechanistically, nascent HSP90B1 is tethered during translation to a specialized CCDC134-containing translocon that forms a microenvironment for its folding, in which STT3A associates with the SRT pseudosubstrate motif, and prevents access to facultative glycosylation sites until folding is completed, rendering its facultative sites inaccessible to the OST-B complex.

The protein resides in the endoplasmic reticulum lumen. It is found in the sarcoplasmic reticulum lumen. Its subcellular location is the melanosome. The enzyme catalyses ATP + H2O = ADP + phosphate + H(+). ATP-dependent chaperone involved in the processing of proteins in the endoplasmic reticulum, regulating their transport. Together with MESD, acts as a modulator of the Wnt pathway by promoting the folding of LRP6, a coreceptor of the canonical Wnt pathway. When associated with CNPY3, required for proper folding of Toll-like receptors. Promotes folding and trafficking of TLR4 to the cell surface. May participate in the unfolding of cytosolic leaderless cargos (lacking the secretion signal sequence) such as the interleukin 1/IL-1 to facilitate their translocation into the ERGIC (endoplasmic reticulum-Golgi intermediate compartment) and secretion; the translocation process is mediated by the cargo receptor TMED10. The polypeptide is Endoplasmin (HSP90B1) (Oryctolagus cuniculus (Rabbit)).